The primary structure comprises 146 residues: Allograft inflammatory factor 1 (146 aa).

At S1 the chain carries N-acetylserine. N6-acetyllysine is present on K10. A Phosphoserine modification is found at S38. An EF-hand 1 domain is found at 44-79 (RKLEAFKQKYMEFDLNGNGDIDIMSLKRMLEKLGVP). Ca(2+)-binding residues include D57, N59, N61, D63, and T99. Residues 81–115 (THLELKKLIKEVSSGSGETFSYSIFLKMMLGKRSA) enclose the EF-hand 2; degenerate domain. The disordered stretch occupies residues 127–146 (AREQEKPTGPPAKKAISELP).

Homodimer (Potential). Monomer. Interacts with LCP1. As to expression, microglial cells in the central nervous system and dendritic cells and macrophages in several organs.

The protein localises to the cytoplasm. Its subcellular location is the cytoskeleton. It localises to the cell projection. It is found in the ruffle membrane. The protein resides in the phagocytic cup. In terms of biological role, actin-binding protein that enhances membrane ruffling and RAC activation. Enhances the actin-bundling activity of LCP1. Binds calcium. Plays a role in RAC signaling and in phagocytosis. May play a role in macrophage activation and function. Promotes the proliferation of vascular smooth muscle cells and of T-lymphocytes. Enhances lymphocyte migration. Plays a role in vascular inflammation. Has a dual influence on glucose-induced insulin secretion: inhibition at low concentration and stimulation at high concentrations. The sequence is that of Allograft inflammatory factor 1 (AIF1) from Sus scrofa (Pig).